The primary structure comprises 352 residues: 4-hydroxy-2-oxovalerate aldolase 5 (352 aa).

One can recognise a Pyruvate carboxyltransferase domain in the interval 9-261; that stretch reads IRVTDSSLRD…RTGIDTLKII (253 aa). Substrate is bound at residue 17-18; it reads RD. Asp18 is a binding site for Mn(2+). Catalysis depends on His21, which acts as the Proton acceptor. Substrate-binding residues include Ser171 and His200. Residues His200 and His202 each coordinate Mn(2+). Tyr291 contributes to the substrate binding site.

The protein belongs to the 4-hydroxy-2-oxovalerate aldolase family.

It carries out the reaction (S)-4-hydroxy-2-oxopentanoate = acetaldehyde + pyruvate. This chain is 4-hydroxy-2-oxovalerate aldolase 5, found in Rhodococcus opacus (strain B4).